A 159-amino-acid chain; its full sequence is Eukaryotic translation initiation factor 5A (159 aa).

K51 is subject to Hypusine.

Belongs to the eIF-5A family. In terms of processing, lys-51 undergoes hypusination, a unique post-translational modification that consists in the addition of a butylamino group from spermidine to lysine side chain, leading to the formation of the unusual amino acid hypusine. eIF-5As are the only known proteins to undergo this modification, which is essential for their function.

Its subcellular location is the cytoplasm. In terms of biological role, translation factor that promotes translation elongation and termination, particularly upon ribosome stalling at specific amino acid sequence contexts. Binds between the exit (E) and peptidyl (P) site of the ribosome and promotes rescue of stalled ribosome: specifically required for efficient translation of polyproline-containing peptides as well as other motifs that stall the ribosome. Acts as a ribosome quality control (RQC) cofactor by joining the RQC complex to facilitate peptidyl transfer during CAT tailing step. Functions as a regulator of autophagy. This Drosophila melanogaster (Fruit fly) protein is Eukaryotic translation initiation factor 5A.